A 728-amino-acid chain; its full sequence is NF-kappa-B inhibitor zeta (728 aa).

Residues 45-107 (GAGDTGYLSA…PHMGVGRQQR (63 aa)) are disordered. Low complexity predominate over residues 53-82 (SAVPSAPGSPGSDSSDFSSTSSVSSCGAVE). Residues 83-96 (SRPRGGARAERPQV) are compositionally biased toward basic and acidic residues. One can recognise an OCA domain in the interval 107–129 (RGPFQGVRVKNSVKELLLHIRSN). A Nuclear localization signal motif is present at residues 163-178 (KRKGPDPLSDGPVCKR). Composition is skewed to polar residues over residues 241 to 250 (PTVPQNSPRD) and 268 to 288 (QPFQ…YQYS). Positions 241 to 334 (PTVPQNSPRD…SQSPKYDSNL (94 aa)) are disordered. The segment covering 303–315 (QQQHQQNYPHNSP) has biased composition (low complexity). The segment covering 316–330 (LQFSPYSRMSQSPKY) has biased composition (polar residues). The interval 329–403 (KYDSNLFDTH…VGVHDVGSHS (75 aa)) is required for transcriptional activity. The segment at 414–728 (MGSPMNTTQL…KSIQQRAPPY (315 aa)) is interaction with NFKB1/p50. ANK repeat units lie at residues 453–482 (DGDT…ALHM), 489–518 (NGQS…QVNT), 522–551 (WGRT…RSNQ), 561–589 (DGLT…SHSP), 591–617 (VQDL…AVEA), 622–651 (SGRT…CLSF), and 658–691 (NGNT…DPST).

As to quaternary structure, interacts with NFKB1/p50. Interacts with RELA. Interacts with AKIRIN2. As to expression, expressed in kidney, liver, lung and heart. Expressed at very low levels in skeletal muscle, spleen and brain.

It localises to the nucleus. Involved in regulation of NF-kappa-B transcription factor complexes. Inhibits NF-kappa-B activity without affecting its nuclear translocation upon stimulation. Inhibits DNA-binding of RELA and NFKB1/p50, and of the NF-kappa-B p65-p50 heterodimer and the NF-kappa-B p50-p50 homodimer. Also seems to activate NF-kappa-B-mediated transcription. In vitro, upon association with NFKB1/p50 has transcriptional activation activity and, together with NFKB1/p50 and RELA, is recruited to LCN2 promoters. Promotes transcription of LCN2 and DEFB4. Is recruited to IL-6 promoters and activates IL-6 but decreases TNF-alpha production in response to LPS. Seems to be involved in the induction of inflammatory genes activated through TLR/IL-1 receptor signaling. Involved in the induction of T helper 17 cells (Th17) differentiation upon recognition of antigen by T cell antigen receptor (TCR). This Mus musculus (Mouse) protein is NF-kappa-B inhibitor zeta (Nfkbiz).